We begin with the raw amino-acid sequence, 342 residues long: GTPase Obg (342 aa).

The Obg domain occupies 1–159; the sequence is MQFIDRAEIE…RNLRLELKLL (159 aa). The 169-residue stretch at 160–328 folds into the OBG-type G domain; it reads AEVGIIGLPN…LLQAIWHRLD (169 aa). Residues 166-173, 191-195, 213-216, 280-283, and 309-311 each bind GTP; these read GLPNAGKS, FTTLV, DIPG, NKVD, and SAV. 2 residues coordinate Mg(2+): S173 and T193.

It belongs to the TRAFAC class OBG-HflX-like GTPase superfamily. OBG GTPase family. Monomer. Mg(2+) is required as a cofactor.

It localises to the cytoplasm. In terms of biological role, an essential GTPase which binds GTP, GDP and possibly (p)ppGpp with moderate affinity, with high nucleotide exchange rates and a fairly low GTP hydrolysis rate. Plays a role in control of the cell cycle, stress response, ribosome biogenesis and in those bacteria that undergo differentiation, in morphogenesis control. This Crocosphaera subtropica (strain ATCC 51142 / BH68) (Cyanothece sp. (strain ATCC 51142)) protein is GTPase Obg.